Reading from the N-terminus, the 510-residue chain is NAD(P)H-quinone oxidoreductase subunit 2 A, chloroplastic (510 aa).

13 helical membrane passes run 24 to 44 (LLLF…GLIL), 57 to 77 (IPWL…ALLF), 99 to 119 (IFQF…VEYI), 124 to 144 (MAIT…MFLC), 149 to 169 (LITI…LSGY), 183 to 203 (YLLM…WLYG), 227 to 247 (PGIS…LSPA), 295 to 315 (WHLL…LIAI), 323 to 343 (MLAY…IVGD), 354 to 374 (YMLF…LFGL), 395 to 415 (ALSL…AGFF), 418 to 438 (LYLF…IGLL), and 484 to 504 (MIVC…IIAI).

The protein belongs to the complex I subunit 2 family. As to quaternary structure, NDH is composed of at least 16 different subunits, 5 of which are encoded in the nucleus.

The protein resides in the plastid. It is found in the chloroplast thylakoid membrane. The enzyme catalyses a plastoquinone + NADH + (n+1) H(+)(in) = a plastoquinol + NAD(+) + n H(+)(out). The catalysed reaction is a plastoquinone + NADPH + (n+1) H(+)(in) = a plastoquinol + NADP(+) + n H(+)(out). Functionally, NDH shuttles electrons from NAD(P)H:plastoquinone, via FMN and iron-sulfur (Fe-S) centers, to quinones in the photosynthetic chain and possibly in a chloroplast respiratory chain. The immediate electron acceptor for the enzyme in this species is believed to be plastoquinone. Couples the redox reaction to proton translocation, and thus conserves the redox energy in a proton gradient. The chain is NAD(P)H-quinone oxidoreductase subunit 2 A, chloroplastic from Solanum lycopersicum (Tomato).